The chain runs to 378 residues: Putative F-box protein At5g51000 (378 aa).

Positions 1 to 47 (MSTMSDLFPDLVEEILSRVPITSLKAVKLTCKQWNDLSKDSSFTKNH) constitute an F-box domain.

The protein is Putative F-box protein At5g51000 of Arabidopsis thaliana (Mouse-ear cress).